The chain runs to 99 residues: uncharacterized protein (99 aa).

The chain crosses the membrane as a helical span at residues 10–29; it reads ELSVHTGTVTHTIFVYVFLG.

It localises to the membrane. This is an uncharacterized protein from Schizosaccharomyces pombe (strain 972 / ATCC 24843) (Fission yeast).